Here is a 301-residue protein sequence, read N- to C-terminus: G-protein coupled receptor homolog U51 (301 aa).

At Met1–Glu15 the chain is on the extracellular side. Residues Phe16–Val36 traverse the membrane as a helical segment. The Cytoplasmic portion of the chain corresponds to Arg37 to Ala48. Residues Val49 to Leu69 traverse the membrane as a helical segment. Topologically, residues Ser70 to Ile82 are extracellular. The chain crosses the membrane as a helical span at residues Leu83–Ile103. Over Glu104 to Ala122 the chain is Cytoplasmic. The helical transmembrane segment at Leu123–Leu143 threads the bilayer. The Extracellular segment spans residues Asn144–Asp168. Residue Asn153 is glycosylated (N-linked (GlcNAc...) asparagine; by host). A helical transmembrane segment spans residues Met169–Tyr189. Topologically, residues Ser190–Glu199 are cytoplasmic. A helical transmembrane segment spans residues Leu200–Pro220. Residues Lys221–Asp238 are Extracellular-facing. Residues Ile239–Ala259 form a helical membrane-spanning segment. Over Cys260–Lys301 the chain is Cytoplasmic.

The protein belongs to the G-protein coupled receptor 1 family.

The protein localises to the host cell membrane. The sequence is that of G-protein coupled receptor homolog U51 (U51) from Homo sapiens (Human).